Here is a 21-residue protein sequence, read N- to C-terminus: Fibrinogen beta chain (21 aa).

At glutamine 1 the chain carries Pyrrolidone carboxylic acid. Positions 1–11 are enriched in acidic residues; the sequence is QFPTDYDEGED. The tract at residues 1 to 21 is disordered; it reads QFPTDYDEGEDDRPKSGLGAR. Threonine 4 is a glycosylation site (O-linked (GalNAc...) threonine). Tyrosine 6 bears the Sulfotyrosine mark.

Heterohexamer; disulfide linked. Contains 2 sets of 3 non-identical chains (alpha, beta and gamma). The 2 heterotrimers are in head to head conformation with the N-termini in a small central domain. Post-translationally, conversion of fibrinogen to fibrin is triggered by thrombin, which cleaves fibrinopeptides A and B from alpha and beta chains, and thus exposes the N-terminal polymerization sites responsible for the formation of the soft clot.

It is found in the secreted. Cleaved by the protease thrombin to yield monomers which, together with fibrinogen alpha (FGA) and fibrinogen gamma (FGG), polymerize to form an insoluble fibrin matrix. Fibrin has a major function in hemostasis as one of the primary components of blood clots. In addition, functions during the early stages of wound repair to stabilize the lesion and guide cell migration during re-epithelialization. Was originally thought to be essential for platelet aggregation, based on in vitro studies using anticoagulated blood. However subsequent studies have shown that it is not absolutely required for thrombus formation in vivo. Enhances expression of SELP in activated platelets. Maternal fibrinogen is essential for successful pregnancy. Fibrin deposition is also associated with infection, where it protects against IFNG-mediated hemorrhage. May also facilitate the antibacterial immune response via both innate and T-cell mediated pathways. The chain is Fibrinogen beta chain (FGB) from Syncerus caffer (African buffalo).